A 292-amino-acid chain; its full sequence is 33 kDa chaperonin (292 aa).

2 disulfide bridges follow: cysteine 238-cysteine 240 and cysteine 271-cysteine 274.

The protein belongs to the HSP33 family. Under oxidizing conditions two disulfide bonds are formed involving the reactive cysteines. Under reducing conditions zinc is bound to the reactive cysteines and the protein is inactive.

It localises to the cytoplasm. Redox regulated molecular chaperone. Protects both thermally unfolding and oxidatively damaged proteins from irreversible aggregation. Plays an important role in the bacterial defense system toward oxidative stress. The protein is 33 kDa chaperonin of Latilactobacillus sakei subsp. sakei (strain 23K) (Lactobacillus sakei subsp. sakei).